Here is a 195-residue protein sequence, read N- to C-terminus: Probable nicotinate-nucleotide adenylyltransferase (195 aa).

It belongs to the NadD family.

It catalyses the reaction nicotinate beta-D-ribonucleotide + ATP + H(+) = deamido-NAD(+) + diphosphate. Its pathway is cofactor biosynthesis; NAD(+) biosynthesis; deamido-NAD(+) from nicotinate D-ribonucleotide: step 1/1. Functionally, catalyzes the reversible adenylation of nicotinate mononucleotide (NaMN) to nicotinic acid adenine dinucleotide (NaAD). In Opitutus terrae (strain DSM 11246 / JCM 15787 / PB90-1), this protein is Probable nicotinate-nucleotide adenylyltransferase.